A 607-amino-acid polypeptide reads, in one-letter code: UvrABC system protein C (607 aa).

Positions 16 to 94 (HLPGVYRHLD…IKSLRPRYNI (79 aa)) constitute a GIY-YIG domain. In terms of domain architecture, UVR spans 203–238 (REVMDEIEARMQQASGELRFEEAAVLRDQMGSLSKV).

The protein belongs to the UvrC family. Interacts with UvrB in an incision complex.

The protein resides in the cytoplasm. Functionally, the UvrABC repair system catalyzes the recognition and processing of DNA lesions. UvrC both incises the 5' and 3' sides of the lesion. The N-terminal half is responsible for the 3' incision and the C-terminal half is responsible for the 5' incision. This is UvrABC system protein C from Bordetella avium (strain 197N).